A 549-amino-acid polypeptide reads, in one-letter code: Cilia- and flagella-associated protein 45 (549 aa).

Residues 1 to 29 are disordered; that stretch reads MPLSPAGVLSSTSTASNRSRNRPRYRTKA. 3 coiled-coil regions span residues 119-232, 259-393, and 434-522; these read REEL…MMEV, IVEQ…KRNQ, and AVQV…KIEE. The tract at residues 388–416 is disordered; it reads RAKRNQEVADREWRRKEKENAQKKMETEA.

It belongs to the CFAP45 family. In terms of assembly, microtubule inner protein component of sperm flagellar doublet microtubules. Interacts with AK8; dimerization with AK8 may create a cavity at the interface of the dimer that can accommodate AMP. Interacts with CFAP52. Interacts with ENKUR. Directly interacts with DNALI1. Interacts with DNAH11. Interacts with DNAI1. Expressed in respiratory cells (at protein level).

It is found in the cytoplasm. The protein resides in the cytoskeleton. It localises to the cilium axoneme. Its subcellular location is the flagellum axoneme. The protein localises to the cell projection. It is found in the cilium. The protein resides in the flagellum. In terms of biological role, microtubule inner protein (MIP) part of the dynein-decorated doublet microtubules (DMTs) in cilia axoneme, which is required for motile cilia beating. It is an AMP-binding protein that may facilitate dynein ATPase-dependent ciliary and flagellar beating via adenine nucleotide homeostasis. May function as a donor of AMP to AK8 and hence promote ADP production. The protein is Cilia- and flagella-associated protein 45 (CFAP45) of Sus scrofa (Pig).